A 152-amino-acid chain; its full sequence is Large ribosomal subunit protein bL9 (152 aa).

It belongs to the bacterial ribosomal protein bL9 family.

Its function is as follows. Binds to the 23S rRNA. The sequence is that of Large ribosomal subunit protein bL9 from Rippkaea orientalis (strain PCC 8801 / RF-1) (Cyanothece sp. (strain PCC 8801)).